Here is a 476-residue protein sequence, read N- to C-terminus: UDP-N-acetylmuramate--L-alanine ligase (476 aa).

Residue 125–131 (GTHGKTT) coordinates ATP.

It belongs to the MurCDEF family.

It localises to the cytoplasm. The catalysed reaction is UDP-N-acetyl-alpha-D-muramate + L-alanine + ATP = UDP-N-acetyl-alpha-D-muramoyl-L-alanine + ADP + phosphate + H(+). Its pathway is cell wall biogenesis; peptidoglycan biosynthesis. Functionally, cell wall formation. The sequence is that of UDP-N-acetylmuramate--L-alanine ligase from Histophilus somni (strain 129Pt) (Haemophilus somnus).